A 462-amino-acid chain; its full sequence is C4-dicarboxylate transport transcriptional regulatory protein DctD (462 aa).

The 115-residue stretch at 12 to 126 folds into the Response regulatory domain; sequence QVLLIDDDPH…ALLDSVRRAL (115 aa). Asp-61 carries the 4-aspartylphosphate modification. The Sigma-54 factor interaction domain occupies 152 to 381; that stretch reads LIGRSAGMQR…LQNAAERFAL (230 aa). ATP contacts are provided by residues 180–187 and 243–252; these read GETGAGKE and ANGGTLFLDE.

Post-translationally, phosphorylated by DctB.

Functionally, member of the two-component regulatory system DctB/DctD, which regulates C4-dicarboxylate transport via regulation of expression of the dctPQM operon and dctA. The chain is C4-dicarboxylate transport transcriptional regulatory protein DctD from Pseudomonas aeruginosa (strain ATCC 15692 / DSM 22644 / CIP 104116 / JCM 14847 / LMG 12228 / 1C / PRS 101 / PAO1).